Consider the following 160-residue polypeptide: Cytochrome b6-f complex subunit 4 (160 aa).

Helical transmembrane passes span 36 to 56 (LLYM…GLAV), 95 to 115 (LLGV…PFIE), and 131 to 151 (TVFL…TLPI).

The protein belongs to the cytochrome b family. PetD subfamily. In terms of assembly, the 4 large subunits of the cytochrome b6-f complex are cytochrome b6, subunit IV (17 kDa polypeptide, petD), cytochrome f and the Rieske protein, while the 4 small subunits are petG, petL, petM and petN. The complex functions as a dimer.

It is found in the plastid. The protein resides in the chloroplast thylakoid membrane. Its function is as follows. Component of the cytochrome b6-f complex, which mediates electron transfer between photosystem II (PSII) and photosystem I (PSI), cyclic electron flow around PSI, and state transitions. The protein is Cytochrome b6-f complex subunit 4 of Coleochaete orbicularis (Charophycean green alga).